Reading from the N-terminus, the 161-residue chain is MTKLNELAPAPGSTKGRMRVGRGPGSGKGKTAGRGVKGQKARSGVAIAGFEGGQMPLHMRMPKRGFNNPFRLEFAEVNLWRLEQAVEAGKLKAGADVSVADLVAAGVIRRELDGVKLLGKGEIKSALKLTVYSATEAAIKAVEAAGGSVTVTKKAKVQAEA.

The disordered stretch occupies residues 1–41 (MTKLNELAPAPGSTKGRMRVGRGPGSGKGKTAGRGVKGQKA). Positions 22 to 36 (RGPGSGKGKTAGRGV) are enriched in gly residues.

The protein belongs to the universal ribosomal protein uL15 family. In terms of assembly, part of the 50S ribosomal subunit.

Functionally, binds to the 23S rRNA. This chain is Large ribosomal subunit protein uL15, found in Caulobacter sp. (strain K31).